Reading from the N-terminus, the 197-residue chain is Phosphoheptose isomerase (197 aa).

Residues 41-197 enclose the SIS domain; sequence VVETFRRGGK…EIVERTLFEE (157 aa). Position 56–58 (56–58) interacts with substrate; that stretch reads NGG. Zn(2+) contacts are provided by His-65 and Glu-69. Substrate is bound by residues Glu-69, 98-99, 124-126, Ser-129, and Gln-176; these read ND and STS. Zn(2+)-binding residues include Gln-176 and His-184.

This sequence belongs to the SIS family. GmhA subfamily. Zn(2+) is required as a cofactor.

Its subcellular location is the cytoplasm. The catalysed reaction is 2 D-sedoheptulose 7-phosphate = D-glycero-alpha-D-manno-heptose 7-phosphate + D-glycero-beta-D-manno-heptose 7-phosphate. It participates in carbohydrate biosynthesis; D-glycero-D-manno-heptose 7-phosphate biosynthesis; D-glycero-alpha-D-manno-heptose 7-phosphate and D-glycero-beta-D-manno-heptose 7-phosphate from sedoheptulose 7-phosphate: step 1/1. In terms of biological role, catalyzes the isomerization of sedoheptulose 7-phosphate in D-glycero-D-manno-heptose 7-phosphate. The polypeptide is Phosphoheptose isomerase (Roseiflexus sp. (strain RS-1)).